Consider the following 111-residue polypeptide: Fertilization-influencing membrane protein (111 aa).

A signal peptide spans 1 to 23; sequence MKLWLWVAVGVWMLMAELGTIET. A helical transmembrane segment spans residues 85–105; sequence ILVGTLVVAFFFLLFQFCLHV.

In terms of tissue distribution, testis-specific.

It localises to the cell membrane. Its subcellular location is the secreted. Plays a role in sperm-oocyte fusion process during fertilization. This is Fertilization-influencing membrane protein from Mus musculus (Mouse).